Reading from the N-terminus, the 86-residue chain is Large ribosomal subunit protein bL31B (86 aa).

The protein belongs to the bacterial ribosomal protein bL31 family. Type B subfamily. In terms of assembly, part of the 50S ribosomal subunit.

This chain is Large ribosomal subunit protein bL31B, found in Salmonella agona (strain SL483).